The chain runs to 333 residues: DnaJ homolog subfamily C member 25 homolog (333 aa).

The chain crosses the membrane as a helical span at residues 8-28; sequence LVLLALLPTMALGLLEGLYCG. One can recognise a J domain in the interval 31–99; sequence NCYDVLGVTR…ESRTDYDYML (69 aa). The chain crosses the membrane as a helical span at residues 123 to 143; sequence VRVVIVVVLTIVSVIQYYSGW. Positions 158–208 form a coiled coil; that stretch reads KYRNQALEIARDEIQEKIQKKGKNRMSKNDQRDELERIIRRVIEEKMDVKG. The helical transmembrane segment at 218 to 238 threads the bilayer; it reads VLWVQLIICPYTILSFIVWHA.

Belongs to the DNAJC25 family.

Its subcellular location is the membrane. The chain is DnaJ homolog subfamily C member 25 homolog from Drosophila melanogaster (Fruit fly).